The sequence spans 81 residues: uncharacterized protein (81 aa).

The N-terminal 20 residues, M1 to A20, are a transit peptide targeting the mitochondrion. A disordered region spans residues Y27–Q53. Positions G28 to Q53 are enriched in low complexity. The chain crosses the membrane as a helical span at residues I59–M79.

The protein localises to the mitochondrion membrane. This is an uncharacterized protein from Schizosaccharomyces pombe (strain 972 / ATCC 24843) (Fission yeast).